We begin with the raw amino-acid sequence, 353 residues long: Photosystem II protein D1 (353 aa).

Thr2 carries the N-acetylthreonine modification. Thr2 carries the post-translational modification Phosphothreonine. The next 3 membrane-spanning stretches (helical) occupy residues Tyr29 to Ser46, His118 to Leu133, and Trp142 to Ala156. His118 is a binding site for chlorophyll a. Residue Tyr126 participates in pheophytin a binding. [CaMn4O5] cluster is bound by residues Asp170 and Glu189. A helical membrane pass occupies residues Phe197–Leu218. Residue His198 coordinates chlorophyll a. A quinone contacts are provided by residues His215 and Ser264–Phe265. His215 contributes to the Fe cation binding site. His272 provides a ligand contact to Fe cation. A helical transmembrane segment spans residues Phe274 to Leu288. 4 residues coordinate [CaMn4O5] cluster: His332, Glu333, Asp342, and Ala344. A propeptide spanning residues Ala345–Gly353 is cleaved from the precursor.

It belongs to the reaction center PufL/M/PsbA/D family. PSII is composed of 1 copy each of membrane proteins PsbA, PsbB, PsbC, PsbD, PsbE, PsbF, PsbH, PsbI, PsbJ, PsbK, PsbL, PsbM, PsbT, PsbX, PsbY, PsbZ, Psb30/Ycf12, at least 3 peripheral proteins of the oxygen-evolving complex and a large number of cofactors. It forms dimeric complexes. It depends on The D1/D2 heterodimer binds P680, chlorophylls that are the primary electron donor of PSII, and subsequent electron acceptors. It shares a non-heme iron and each subunit binds pheophytin, quinone, additional chlorophylls, carotenoids and lipids. D1 provides most of the ligands for the Mn4-Ca-O5 cluster of the oxygen-evolving complex (OEC). There is also a Cl(-1) ion associated with D1 and D2, which is required for oxygen evolution. The PSII complex binds additional chlorophylls, carotenoids and specific lipids. as a cofactor. Tyr-161 forms a radical intermediate that is referred to as redox-active TyrZ, YZ or Y-Z. Post-translationally, C-terminally processed by CTPA; processing is essential to allow assembly of the oxygen-evolving complex and thus photosynthetic growth.

It is found in the plastid. Its subcellular location is the chloroplast thylakoid membrane. The enzyme catalyses 2 a plastoquinone + 4 hnu + 2 H2O = 2 a plastoquinol + O2. Its function is as follows. Photosystem II (PSII) is a light-driven water:plastoquinone oxidoreductase that uses light energy to abstract electrons from H(2)O, generating O(2) and a proton gradient subsequently used for ATP formation. It consists of a core antenna complex that captures photons, and an electron transfer chain that converts photonic excitation into a charge separation. The D1/D2 (PsbA/PsbD) reaction center heterodimer binds P680, the primary electron donor of PSII as well as several subsequent electron acceptors. The chain is Photosystem II protein D1 from Ceratophyllum demersum (Rigid hornwort).